Consider the following 678-residue polypeptide: MNIRMGTKGKRPLRSLTPRDKIHAIQRIHDGESKASVARDIGVPESTLRGWCKNEDKLRFMSRQSATDNLCADALGDKMDGGGGGGGGAGGGGLLGPPEKRQRLDGALPLNFSNKLKFDELAFKRSPLNGLDYSTNKNLADLGYNGLPVDYAAFNGGVKAKVFGADINRPAADPSLNAISPLSSLTHLSGLTGISQSPLAISFNELTTNLNLLAQLNPGLAAMSGLNSFPAGAGNLRTPKPSGQTPLQVQSPRSDSGDRSAQGLSVKNWAKQKPGEGQGSLNLSIKNEGKGGDIKSPSPSIAPSQMGGPMTLSNLAEDPLLYWLKSQQTMLGLNPLYPPTIPMGVTSPPIRSSTPQHMSQLAQTPPIPSAPLTPSSTPSGSLDEKNAAWYNWCKAFGASLHTLNPNAATLAALQANQLQQQVATTAAEGGSMGDPSNILYSHLTKETETPSVRSLSSNEQNPEADEATETDLDGEVEPEASGKPEDLSAAGKVMTPSQSPIAHSSGSRSPEPKAKTKTPETTNSTSECKKILDNMLFKMGGMEATGPLMPEQGSSESEGSFQDTSNPHTNNNDVSASNNNNNNNSNKTDEEEKAKYLDCTADEDIEAIRHGEKFLQWLENCSNPRVTAVQLMQLRFLIAAIKSGNETPMIEKSALPEDSEEHAAEEEGSGRGKSRRRK.

Positions 7–58 constitute an HTH psq-type domain; it reads TKGKRPLRSLTPRDKIHAIQRIHDGESKASVARDIGVPESTLRGWCKNEDKL. The H-T-H motif DNA-binding region spans 34-54; sequence KASVARDIGVPESTLRGWCKN. Disordered regions lie at residues 232-310, 344-381, 445-528, 541-592, and 645-678; these read GAGN…GGPM, GVTS…PSGS, KETE…TSEC, GMEA…DEEE, and NETP…RRRK. Polar residues-rich tracts occupy residues 241–254 and 349–363; these read PSGQ…SPRS and PIRS…QLAQ. Phosphoserine occurs at positions 251 and 254. Positions 372–381 are enriched in low complexity; it reads LTPSSTPSGS. Over residues 449-461 the composition is skewed to polar residues; it reads TPSVRSLSSNEQN. Acidic residues predominate over residues 462–478; it reads PEADEATETDLDGEVEP. The span at 495–508 shows a compositional bias: polar residues; the sequence is TPSQSPIAHSSGSR. The segment covering 570–586 has biased composition (low complexity); the sequence is NNNDVSASNNNNNNNSN. The segment covering 657–667 has biased composition (acidic residues); it reads EDSEEHAAEEE.

As to quaternary structure, homomers. Interacts with itself, danr, ey and dac to form a complex (or complexes) containing the RD factors. In terms of tissue distribution, coexpressed with danr in the presumptive distal antenna, but not in the leg imaginal disk. Both proteins are also expressed in the brain and the eye region of the eye-antenna disk. First detected in early L3 eye disks in cells surrounding the newly initiated MF. Levels are uniform and high anterior to the furrow, lower levels within and posterior to the furrow. Limited expression is seen in small groups of cells in leg and wing. These appear in the location of prominent sense organ progenitors at relatively late stages of disk development.

The protein localises to the nucleus. Its function is as follows. Probable transcription factor with a role in the retinal determination (RD) network. Regulates ato expression and is required for normal R8 induction and differentiation. Danr appears to repress Dan expression, but Dan is required for Danr expression anterior to the morphogenetic furrow (MF). Dan and Danr lie downstream of so and require dac function for highest levels of expression. Contributes to differentiation of antenna-specific characteristics; effector gene that acts downstream of homothorax (hth), Distal-less (Dll), cut (ct) and spineless (ss) genes to control differentiation of distal antennal structures. This Drosophila melanogaster (Fruit fly) protein is Protein distal antenna.